Here is a 156-residue protein sequence, read N- to C-terminus: Small ribosomal subunit protein uS7 (156 aa).

This sequence belongs to the universal ribosomal protein uS7 family. Part of the 30S ribosomal subunit. Contacts proteins S9 and S11.

Functionally, one of the primary rRNA binding proteins, it binds directly to 16S rRNA where it nucleates assembly of the head domain of the 30S subunit. Is located at the subunit interface close to the decoding center, probably blocks exit of the E-site tRNA. In Ruegeria pomeroyi (strain ATCC 700808 / DSM 15171 / DSS-3) (Silicibacter pomeroyi), this protein is Small ribosomal subunit protein uS7.